A 320-amino-acid chain; its full sequence is Cytochrome c1-1, heme protein, mitochondrial (320 aa).

Residues 1-77 constitute a mitochondrion transit peptide; sequence MSLGKKIRIG…LLSFATIAYS (77 aa). Topologically, residues 78-280 are mitochondrial intermembrane; that stretch reads DEAEHGLECP…WAAEPEMEER (203 aa). A Cytochrome c domain is found at 103-210; sequence ASIRRGHQVY…NGQNYVFALL (108 aa). Heme c-binding residues include cysteine 116, cysteine 119, histidine 120, and methionine 239. Residues 281–301 form a helical membrane-spanning segment; it reads KLMGFKWIFVLSLALLQAAYY. At 302 to 320 the chain is on the mitochondrial matrix side; it reads RRLRWSVLKSRKLVLDVVN.

Belongs to the cytochrome c family. Component of the ubiquinol-cytochrome c oxidoreductase (cytochrome b-c1 complex, complex III, CIII), a multisubunit enzyme composed of 3 respiratory subunits cytochrome b, cytochrome c1 and Rieske protein, 2 core protein subunits, and additional low-molecular weight protein subunits. The complex exists as an obligatory dimer and forms supercomplexes (SCs) in the inner mitochondrial membrane with cytochrome c oxidase (complex IV, CIV). Heme c is required as a cofactor. In all tissues analyzed.

It localises to the mitochondrion inner membrane. The catalysed reaction is a quinol + 2 Fe(III)-[cytochrome c](out) = a quinone + 2 Fe(II)-[cytochrome c](out) + 2 H(+)(out). Functionally, component of the ubiquinol-cytochrome c oxidoreductase, a multisubunit transmembrane complex that is part of the mitochondrial electron transport chain which drives oxidative phosphorylation. The respiratory chain contains 3 multisubunit complexes succinate dehydrogenase (complex II, CII), ubiquinol-cytochrome c oxidoreductase (cytochrome b-c1 complex, complex III, CIII) and cytochrome c oxidase (complex IV, CIV), that cooperate to transfer electrons derived from NADH and succinate to molecular oxygen, creating an electrochemical gradient over the inner membrane that drives transmembrane transport and the ATP synthase. The cytochrome b-c1 complex catalyzes electron transfer from ubiquinol to cytochrome c, linking this redox reaction to translocation of protons across the mitochondrial inner membrane, with protons being carried across the membrane as hydrogens on the quinol. In the process called Q cycle, 2 protons are consumed from the matrix, 4 protons are released into the intermembrane space and 2 electrons are passed to cytochrome c. Cytochrome c1 is a catalytic core subunit containing a c-type heme. It transfers electrons from the [2Fe-2S] iron-sulfur cluster of the Rieske protein to cytochrome c. This is Cytochrome c1-1, heme protein, mitochondrial (CYCL) from Solanum tuberosum (Potato).